A 208-amino-acid chain; its full sequence is Riboflavin synthase (208 aa).

Lumazine-binding repeat units lie at residues 1 to 97 (MFTG…MGGH) and 98 to 195 (FVQG…EKLV). Residues 4-6 (GLV), 48-50 (CLT), 62-67 (GIAPES), 101-103 (GHV), Lys-137, 146-148 (SLT), and 160-165 (MMISYT) each bind 2,4-dihydroxypteridine.

Homotrimer.

It carries out the reaction 2 6,7-dimethyl-8-(1-D-ribityl)lumazine + H(+) = 5-amino-6-(D-ribitylamino)uracil + riboflavin. It participates in cofactor biosynthesis; riboflavin biosynthesis; riboflavin from 2-hydroxy-3-oxobutyl phosphate and 5-amino-6-(D-ribitylamino)uracil: step 2/2. Its function is as follows. Catalyzes the dismutation of two molecules of 6,7-dimethyl-8-ribityllumazine, resulting in the formation of riboflavin and 5-amino-6-(D-ribitylamino)uracil. This Schizosaccharomyces pombe (strain 972 / ATCC 24843) (Fission yeast) protein is Riboflavin synthase (rib5).